Consider the following 257-residue polypeptide: Deoxyribose-phosphate aldolase (257 aa).

Aspartate 102 serves as the catalytic Proton donor/acceptor. The Schiff-base intermediate with acetaldehyde role is filled by lysine 166. The active-site Proton donor/acceptor is lysine 198.

It belongs to the DeoC/FbaB aldolase family. DeoC type 2 subfamily.

The protein localises to the cytoplasm. The enzyme catalyses 2-deoxy-D-ribose 5-phosphate = D-glyceraldehyde 3-phosphate + acetaldehyde. The protein operates within carbohydrate degradation; 2-deoxy-D-ribose 1-phosphate degradation; D-glyceraldehyde 3-phosphate and acetaldehyde from 2-deoxy-alpha-D-ribose 1-phosphate: step 2/2. Catalyzes a reversible aldol reaction between acetaldehyde and D-glyceraldehyde 3-phosphate to generate 2-deoxy-D-ribose 5-phosphate. The chain is Deoxyribose-phosphate aldolase from Shewanella amazonensis (strain ATCC BAA-1098 / SB2B).